The following is a 216-amino-acid chain: Uracil phosphoribosyltransferase (216 aa).

Position 30-34 (30-34 (KNLVR)) interacts with GTP. Residues arginine 80, arginine 105, and 140–148 (DPMIATAST) each bind 5-phospho-alpha-D-ribose 1-diphosphate. Residues isoleucine 203 and 208-210 (GDA) each bind uracil. Residue aspartate 209 participates in 5-phospho-alpha-D-ribose 1-diphosphate binding.

Belongs to the UPRTase family. Mg(2+) is required as a cofactor.

The enzyme catalyses UMP + diphosphate = 5-phospho-alpha-D-ribose 1-diphosphate + uracil. Its pathway is pyrimidine metabolism; UMP biosynthesis via salvage pathway; UMP from uracil: step 1/1. Its activity is regulated as follows. Allosterically activated by GTP. Catalyzes the conversion of uracil and 5-phospho-alpha-D-ribose 1-diphosphate (PRPP) to UMP and diphosphate. In Saccharolobus islandicus (strain M.16.4 / Kamchatka #3) (Sulfolobus islandicus), this protein is Uracil phosphoribosyltransferase.